The chain runs to 130 residues: Small ribosomal subunit protein uS11c (130 aa).

This sequence belongs to the universal ribosomal protein uS11 family. In terms of assembly, part of the 30S ribosomal subunit.

It localises to the plastid. The protein resides in the chloroplast. The chain is Small ribosomal subunit protein uS11c from Oedogonium cardiacum (Filamentous green alga).